We begin with the raw amino-acid sequence, 621 residues long: tRNA uridine 5-carboxymethylaminomethyl modification enzyme MnmG (621 aa).

8 to 13 lines the FAD pocket; it reads GAGHAG. Position 269–283 (269–283) interacts with NAD(+); sequence GPRYCPSVEDKIFRF.

It belongs to the MnmG family. Homodimer. Heterotetramer of two MnmE and two MnmG subunits. FAD is required as a cofactor.

The protein resides in the cytoplasm. In terms of biological role, NAD-binding protein involved in the addition of a carboxymethylaminomethyl (cmnm) group at the wobble position (U34) of certain tRNAs, forming tRNA-cmnm(5)s(2)U34. In Chlorobium phaeobacteroides (strain DSM 266 / SMG 266 / 2430), this protein is tRNA uridine 5-carboxymethylaminomethyl modification enzyme MnmG.